The primary structure comprises 894 residues: Pentatricopeptide repeat-containing protein At1g19720 (894 aa).

18 PPR repeats span residues 80–110 (KRST…FGLF), 114–144 (DVFV…MRER), 145–179 (NLFT…GVLP), 180–214 (DDFL…GMSS), 215–245 (CLRV…MRER), 246–280 (DVIA…GISP), 281–315 (GLVT…GITA), 316–350 (DVFT…GVVP), 351–385 (NAVT…GFID), 386–416 (DVLV…VKNK), 417–451 (DVYT…NLRP), 452–486 (NIIT…GKVQ), 488–522 (NTAT…RFMP), 523–557 (NSVT…NLDA), 558–588 (IHAV…METK), 589–623 (DIIT…GITP), 624–659 (NRGT…HIIP), and 660–694 (ALEH…SETP). Residues 695–770 (IWESFLTGCR…PLGQSWIEVR (76 aa)) are type E motif. The type E(+) motif stretch occupies residues 771 to 801 (NLIHTFTTGDQSKLCTDVLYPLVEKMSRLDN). A type DYW motif region spans residues 803–894 (SDQYNGELWI…NGDCSCKDYW (92 aa)).

This sequence belongs to the PPR family. PCMP-H subfamily.

The protein is Pentatricopeptide repeat-containing protein At1g19720 (DYW7) of Arabidopsis thaliana (Mouse-ear cress).